Consider the following 472-residue polypeptide: Cell division protein FtsP (472 aa).

A signal peptide (tat-type signal) is located at residues 1-32 (MSLSRRRFIQASGLALCAGGLPLQARASGAQA).

It belongs to the FtsP family. Predicted to be exported by the Tat system. The position of the signal peptide cleavage has not been experimentally proven.

The protein localises to the periplasm. Functionally, cell division protein that is required for growth during stress conditions. May be involved in protecting or stabilizing the divisomal assembly under conditions of stress. The sequence is that of Cell division protein FtsP from Edwardsiella tarda (strain FL6-60).